A 692-amino-acid chain; its full sequence is Vacuolar amino acid transporter 3 (692 aa).

The segment covering 1–14 (MNGKEVSSGSGRTQ) has biased composition (polar residues). The interval 1–71 (MNGKEVSSGS…TGGLLKKPPL (71 aa)) is disordered. Positions 15–24 (SNNNKKNNNG) are enriched in low complexity. Over residues 28 to 38 (GISHASGSPLT) the composition is skewed to polar residues. Residues serine 59, serine 119, and serine 121 each carry the phosphoserine modification. Disordered regions lie at residues 135-170 (KWTN…SNRK) and 258-294 (DLSE…GRHP). Positions 141-153 (PSSPSQYQYPSQP) are enriched in low complexity. The segment covering 154–167 (ALSTSIPSQAPSFS) has biased composition (polar residues). Serine 165 is subject to Phosphoserine. Residues 258–279 (DLSEEEEEEEETEEEPEEEALE) show a composition bias toward acidic residues. 11 helical membrane passes run 302–322 (AVLL…PKAF), 329–349 (FSAL…VSLI), 374–394 (FAIL…YTVF), 412–432 (GSIS…PLSL), 443–463 (ALIA…YSIY), 483–503 (WSLF…LIPI), 519–539 (AVMC…YAAF), 561–581 (VQLL…FPAI), 607–627 (YFRC…ANDL), 630–650 (FVSL…PPLL), and 665–685 (LLLD…TSWQ).

The protein belongs to the amino acid/polyamine transporter 2 family.

The protein localises to the vacuole membrane. Involved in amino acid efflux from the vacuole to the cytoplasm. Capable of transporting large neutral amino acids including tyrosine, glutamine, asparagine, isoleucine and leucine. The protein is Vacuolar amino acid transporter 3 (AVT3) of Saccharomyces cerevisiae (strain ATCC 204508 / S288c) (Baker's yeast).